A 272-amino-acid chain; its full sequence is Inositol monophosphatase (272 aa).

Mg(2+)-binding residues include glutamate 71, aspartate 90, isoleucine 92, and aspartate 93. Glutamate 71 is a substrate binding site. Substrate-binding positions include 92–95 (IDGT), 194–196 (GTA), glutamate 213, and aspartate 220. Aspartate 220 is a Mg(2+) binding site.

This sequence belongs to the inositol monophosphatase superfamily. Mg(2+) serves as cofactor.

It localises to the cytoplasm. The catalysed reaction is a myo-inositol phosphate + H2O = myo-inositol + phosphate. It carries out the reaction alpha-D-galactose 1-phosphate + H2O = D-galactose + phosphate. It participates in polyol metabolism; myo-inositol biosynthesis; myo-inositol from D-glucose 6-phosphate: step 2/2. Inhibited by Li(+), Ca(2+) and Mn(2+), but also by Mg(2+) at concentrations above 3 mM. Responsible for the provision of inositol required for synthesis of phosphatidylinositol and polyphosphoinositides. Has broad substrate specificity and can use myo-inositol monophosphates, myo-inositol 1,3-diphosphate, myo-inositol 1,4-diphosphate, scyllo-inositol-phosphate, D-galactose 1-phosphate, glucose-1-phosphate, glucose-6-phosphate, fructose-1-phosphate, beta-glycerophosphate, and 2'-AMP as substrates. The protein is Inositol monophosphatase (impa1) of Dictyostelium discoideum (Social amoeba).